The chain runs to 561 residues: Sensor histidine kinase BtsS (561 aa).

The Cytoplasmic segment spans residues 1-3 (MYD). A helical transmembrane segment spans residues 4-24 (FNLVLLLLQQMCVFLVIAWLM). Over 25–43 (SKTPLFIPLMQVTVRLPHK) the chain is Periplasmic. Residues 44 to 64 (FLCYIVFSIFCIMGTWFGLHI) form a helical membrane-spanning segment. Over 65 to 72 (DDSIANTR) the chain is Cytoplasmic. A helical membrane pass occupies residues 73-93 (AIGAVMGGLLGGPVVGGLVGL). Residues 94–108 (TGGLHRYSMGGMTAL) are Periplasmic-facing. Residues 109–129 (SCMISTIVEGLLGGLVHSILI) form a helical membrane-spanning segment. Residues 130 to 140 (RRGRTDKVFNP) lie on the Cytoplasmic side of the membrane. The helical transmembrane segment at 141-161 (ITAGAVTFVAEMVQMLIILAI) threads the bilayer. The Periplasmic segment spans residues 162-170 (ARPYEDAVR). The chain crosses the membrane as a helical span at residues 171–191 (LVSNIAAPMMVTNTVGAALFM). Topologically, residues 192–561 (RILLDKRAMF…TLRLPWRDEA (370 aa)) are cytoplasmic. Positions 354–559 (QILAGQYERQ…RITLRLPWRD (206 aa)) constitute a Histidine kinase domain.

Post-translationally, autophosphorylated.

It localises to the cell inner membrane. It catalyses the reaction ATP + protein L-histidine = ADP + protein N-phospho-L-histidine.. Functionally, member of the two-component regulatory system BtsS/BtsR. BtsS is a high-affinity receptor for extracellular pyruvate that activates BtsR by phosphorylation. The polypeptide is Sensor histidine kinase BtsS (Escherichia coli O6:H1 (strain CFT073 / ATCC 700928 / UPEC)).